A 442-amino-acid chain; its full sequence is Trigger factor (442 aa).

A PPIase FKBP-type domain is found at 162-247 (GDTVTIDYKG…IHEVKSKQLP (86 aa)).

It belongs to the FKBP-type PPIase family. Tig subfamily.

The protein localises to the cytoplasm. The enzyme catalyses [protein]-peptidylproline (omega=180) = [protein]-peptidylproline (omega=0). Functionally, involved in protein export. Acts as a chaperone by maintaining the newly synthesized protein in an open conformation. Functions as a peptidyl-prolyl cis-trans isomerase. This chain is Trigger factor, found in Lactobacillus acidophilus (strain ATCC 700396 / NCK56 / N2 / NCFM).